The chain runs to 146 residues: D-aminoacyl-tRNA deacylase (146 aa).

The short motif at 137–138 (GP) is the Gly-cisPro motif, important for rejection of L-amino acids element.

This sequence belongs to the DTD family. In terms of assembly, homodimer.

It localises to the cytoplasm. The catalysed reaction is glycyl-tRNA(Ala) + H2O = tRNA(Ala) + glycine + H(+). The enzyme catalyses a D-aminoacyl-tRNA + H2O = a tRNA + a D-alpha-amino acid + H(+). Functionally, an aminoacyl-tRNA editing enzyme that deacylates mischarged D-aminoacyl-tRNAs. Also deacylates mischarged glycyl-tRNA(Ala), protecting cells against glycine mischarging by AlaRS. Acts via tRNA-based rather than protein-based catalysis; rejects L-amino acids rather than detecting D-amino acids in the active site. By recycling D-aminoacyl-tRNA to D-amino acids and free tRNA molecules, this enzyme counteracts the toxicity associated with the formation of D-aminoacyl-tRNA entities in vivo and helps enforce protein L-homochirality. The chain is D-aminoacyl-tRNA deacylase from Bacillus cereus (strain Q1).